The primary structure comprises 333 residues: D-fructose 1,6-bisphosphatase class 2/sedoheptulose 1,7-bisphosphatase (333 aa).

Residues aspartate 33, glutamate 57, aspartate 85, and glutamate 88 each coordinate Mn(2+). Substrate is bound by residues 88-90 (EGT), tyrosine 119, 164-166 (RAR), and 186-188 (DGD). Glutamate 213 serves as a coordination point for Mn(2+).

Belongs to the FBPase class 2 family. As to quaternary structure, homotetramer. Requires Mn(2+) as cofactor.

It carries out the reaction beta-D-fructose 1,6-bisphosphate + H2O = beta-D-fructose 6-phosphate + phosphate. The catalysed reaction is D-sedoheptulose 1,7-bisphosphate + H2O = D-sedoheptulose 7-phosphate + phosphate. It functions in the pathway carbohydrate biosynthesis; Calvin cycle. Catalyzes the hydrolysis of fructose 1,6-bisphosphate (Fru 1,6-P2) and sedoheptulose 1,7-bisphosphate (Sed 1,7-P2) to fructose 6-phosphate and sedoheptulose 7-phosphate, respectively. This Prochlorococcus marinus subsp. pastoris (strain CCMP1986 / NIES-2087 / MED4) protein is D-fructose 1,6-bisphosphatase class 2/sedoheptulose 1,7-bisphosphatase.